Here is a 589-residue protein sequence, read N- to C-terminus: Protein NRT1/ PTR FAMILY 7.2 (589 aa).

A run of 2 helical transmembrane segments spans residues 32 to 52 (WLTAILILVNQGLATLAFFGV) and 78 to 98 (WTGTVYIFSLLGAFLSDSYWG). Residue Thr-102 is modified to Phosphothreonine. A run of 10 helical transmembrane segments spans residues 105 to 125 (IFQASFVAGLMMLSLSTGALL), 147 to 167 (VLFYLSVYLIALGYGGYQPNI), 187 to 207 (IAFFSYFYLALNLGSLFSNTV), 217 to 237 (WPLGFWASAGSAFAGLVLFLI), 343 to 363 (IWLCTILYSVVFTQMASLFVV), 377 to 397 (IPASSMSSFDILSVAFFIFAY), 423 to 443 (MGIGLVIAIMAMISAGIVEIH), 464 to 484 (IFWQVPQYMLIGASEVFMYVG), 504 to 524 (LCMASISLGNYVSSLLVSIVM), and 548 to 568 (FYFLLAGLTAADFVVYLICAK).

It belongs to the major facilitator superfamily. Proton-dependent oligopeptide transporter (POT/PTR) (TC 2.A.17) family. In terms of tissue distribution, expressed in xylem parenchyma cells within the vasculature. Expressed in siliques and flowers. Higher expression in shoots than in roots.

The protein resides in the cell membrane. Low-affinity nitrate transporter. Involved in nitrate removal from xylem sap. Not involved in oligopeptides transport. This is Protein NRT1/ PTR FAMILY 7.2 (NPF7.2) from Arabidopsis thaliana (Mouse-ear cress).